A 150-amino-acid polypeptide reads, in one-letter code: D-aminoacyl-tRNA deacylase (150 aa).

Residues 140–141 (GP) carry the Gly-cisPro motif, important for rejection of L-amino acids motif.

This sequence belongs to the DTD family. As to quaternary structure, homodimer.

It localises to the cytoplasm. It carries out the reaction glycyl-tRNA(Ala) + H2O = tRNA(Ala) + glycine + H(+). It catalyses the reaction a D-aminoacyl-tRNA + H2O = a tRNA + a D-alpha-amino acid + H(+). The catalysed reaction is D-tyrosyl-tRNA(Tyr) + H2O = D-tyrosine + tRNA(Tyr). In terms of biological role, an aminoacyl-tRNA editing enzyme that deacylates mischarged D-aminoacyl-tRNAs. Hydrolyzes D-tyrosyl-tRNA(Tyr) into D-tyrosine and free tRNA(Tyr). May also deacylate mischarged D-leucyl-tRNA(Leu). Also deacylates mischarged glycyl-tRNA(Ala), protecting cells against glycine mischarging by AlaRS. Acts via tRNA-based rather than protein-based catalysis; rejects L-amino acids rather than detecting D-amino acids in the active site. By recycling D-aminoacyl-tRNA to D-amino acids and free tRNA molecules, this enzyme counteracts the toxicity associated with the formation of D-aminoacyl-tRNA entities in vivo and helps enforce protein L-homochirality. The sequence is that of D-aminoacyl-tRNA deacylase from Saccharomyces cerevisiae (strain ATCC 204508 / S288c) (Baker's yeast).